Reading from the N-terminus, the 249-residue chain is 2,3-bisphosphoglycerate-dependent phosphoglycerate mutase (249 aa).

Substrate is bound by residues 9–16 (RHGQSQWN), 22–23 (TG), R61, 88–91 (ERHY), K99, 115–116 (RR), and 184–185 (GN). The active-site Tele-phosphohistidine intermediate is the H10. The active-site Proton donor/acceptor is the E88.

This sequence belongs to the phosphoglycerate mutase family. BPG-dependent PGAM subfamily. In terms of assembly, homodimer.

The enzyme catalyses (2R)-2-phosphoglycerate = (2R)-3-phosphoglycerate. The protein operates within carbohydrate degradation; glycolysis; pyruvate from D-glyceraldehyde 3-phosphate: step 3/5. Catalyzes the interconversion of 2-phosphoglycerate and 3-phosphoglycerate. This is 2,3-bisphosphoglycerate-dependent phosphoglycerate mutase from Xanthomonas oryzae pv. oryzae (strain MAFF 311018).